The sequence spans 201 residues: Putative manganese efflux pump MntP 2 (201 aa).

A run of 6 helical transmembrane segments spans residues 3-23, 39-59, 65-85, 116-136, 141-161, and 176-196; these read LISV…VSIT, IGLF…SIGI, IAAL…GKMI, LILL…SFAF, IINT…IGVM, and ILGG…HTNI.

It belongs to the MntP (TC 9.B.29) family.

The protein localises to the cell membrane. Its function is as follows. Probably functions as a manganese efflux pump. The sequence is that of Putative manganese efflux pump MntP 2 from Clostridium botulinum (strain Hall / ATCC 3502 / NCTC 13319 / Type A).